Reading from the N-terminus, the 186-residue chain is Elongation factor P (186 aa).

It belongs to the elongation factor P family.

The protein localises to the cytoplasm. Its pathway is protein biosynthesis; polypeptide chain elongation. In terms of biological role, involved in peptide bond synthesis. Stimulates efficient translation and peptide-bond synthesis on native or reconstituted 70S ribosomes in vitro. Probably functions indirectly by altering the affinity of the ribosome for aminoacyl-tRNA, thus increasing their reactivity as acceptors for peptidyl transferase. This Streptococcus thermophilus (strain CNRZ 1066) protein is Elongation factor P.